The primary structure comprises 229 residues: Large ribosomal subunit protein uL1 (229 aa).

It belongs to the universal ribosomal protein uL1 family. As to quaternary structure, part of the 50S ribosomal subunit.

In terms of biological role, binds directly to 23S rRNA. The L1 stalk is quite mobile in the ribosome, and is involved in E site tRNA release. Functionally, protein L1 is also a translational repressor protein, it controls the translation of the L11 operon by binding to its mRNA. This chain is Large ribosomal subunit protein uL1, found in Streptococcus pneumoniae serotype 2 (strain D39 / NCTC 7466).